The following is an 85-amino-acid chain: Cell division topological specificity factor (85 aa).

The protein belongs to the MinE family.

Prevents the cell division inhibition by proteins MinC and MinD at internal division sites while permitting inhibition at polar sites. This ensures cell division at the proper site by restricting the formation of a division septum at the midpoint of the long axis of the cell. The chain is Cell division topological specificity factor from Shewanella oneidensis (strain ATCC 700550 / JCM 31522 / CIP 106686 / LMG 19005 / NCIMB 14063 / MR-1).